A 151-amino-acid polypeptide reads, in one-letter code: 3-hydroxyacyl-[acyl-carrier-protein] dehydratase FabZ (151 aa).

Residue H57 is part of the active site.

This sequence belongs to the thioester dehydratase family. FabZ subfamily.

The protein resides in the cytoplasm. It catalyses the reaction a (3R)-hydroxyacyl-[ACP] = a (2E)-enoyl-[ACP] + H2O. In terms of biological role, involved in unsaturated fatty acids biosynthesis. Catalyzes the dehydration of short chain beta-hydroxyacyl-ACPs and long chain saturated and unsaturated beta-hydroxyacyl-ACPs. This Synechococcus sp. (strain CC9605) protein is 3-hydroxyacyl-[acyl-carrier-protein] dehydratase FabZ.